The chain runs to 487 residues: N-succinylglutamate 5-semialdehyde dehydrogenase (487 aa).

Residue 221–226 (GSSRTG) coordinates NAD(+). Catalysis depends on residues glutamate 244 and cysteine 278.

It belongs to the aldehyde dehydrogenase family. AstD subfamily.

The catalysed reaction is N-succinyl-L-glutamate 5-semialdehyde + NAD(+) + H2O = N-succinyl-L-glutamate + NADH + 2 H(+). It participates in amino-acid degradation; L-arginine degradation via AST pathway; L-glutamate and succinate from L-arginine: step 4/5. Its function is as follows. Catalyzes the NAD-dependent reduction of succinylglutamate semialdehyde into succinylglutamate. The polypeptide is N-succinylglutamate 5-semialdehyde dehydrogenase (Pseudomonas putida (strain GB-1)).